A 518-amino-acid chain; its full sequence is DNA-binding protein D-ETS-4 (518 aa).

2 disordered regions span residues 74-113 (SQPI…QSSP) and 152-172 (LPPS…SCGE). A compositionally biased stretch (polar residues) spans 84-94 (TAPYTNPSSHQ). Positions 102 to 113 (PHSAYPSPQSSP) are enriched in low complexity. Positions 158 to 171 (ESNCETPSPRSSCG) are enriched in polar residues. In terms of domain architecture, PNT spans 258 to 344 (HAKREADAIC…AQLEIWKMAY (87 aa)). Residues 393–426 (APLNGSTTSPPATNASNGGTATVKRPNGGRTGGG) are disordered. Residues 396–412 (NGSTTSPPATNASNGGT) are compositionally biased toward polar residues. Positions 430 to 513 (IHLWQFLKEL…RSQRLVYQFC (84 aa)) form a DNA-binding region, ETS.

Belongs to the ETS family. As to expression, transient high expression in pole cells during embryonic stages 8-11.

The protein localises to the nucleus. Functionally, may have a role in germline development. The protein is DNA-binding protein D-ETS-4 (Ets98B) of Drosophila melanogaster (Fruit fly).